The sequence spans 757 residues: MEGPEIKFAEAVLDNGKYGTRTVRFEAGRLAQQAQGAVAAYLDEDTMLLSATSVGKHPKDNFDFFPLTIDVEERSYAAGKIPGSFFRREGRPSTEAILVCRLIDRPLRPSFITGLRNEVQVVITVLSIAPDEFYDSLAINAASASSMLSGIPFSGPIAGVRLALIGDQWVVFPKHSQLKEAVFDITVAGRVVTDSEGNEDVAIMMVEAEATEGAWDLIQGGATKPDEAIVAQGLEAAKPFIQQLVAAQASLAQQAAKPTVDYPVFLPYAQETYDAVSALALDELGTVYQTADKIERQDADDALKTRTKEAVAAKVEAGELPQSALTEFSAAYKSVTKTVVRGRILRDGVRMDGRGLADIRPLDAEVQVIPRVHGSAIFQRGETQILGVTTLNMLKMEQQIDSLSPITKKRYLHHYNFPPYSTGETGRVGSPKRREIGHGFLAERALVPVLPSREDFPYAIRQVSEALGSNGSTSMGSVCASTLSLLNAGVPLRAPVAGIAMGLVSDTVDGQVRYAALTDILGAEDALGDMDFKVAGTSEFVTAIQLDTKLDGIPTSVLDGALKQAKEARTAILGVLNQAIDGPDEMAPTAPRVISVNIPVDKIGELIGPKGKTINAIQDETGADISIEEDGTVYIGAVDGPSADAARAQVNAIANPTNPEVGESFLGTVVKIATFGAFVSLLPGKDGLLHISEVRKLAGGKRVENVEDVLGVGQKILVEITKIDDRGKLSLAPVLEETADQEGRDAASHGSEAPAEG.

Mg(2+)-binding residues include D525 and D531. The KH domain occupies 591-650 (PRVISVNIPVDKIGELIGPKGKTINAIQDETGADISIEEDGTVYIGAVDGPSADAARAQV). The S1 motif domain occupies 662 to 734 (GESFLGTVVK…DRGKLSLAPV (73 aa)). Residues 737-757 (ETADQEGRDAASHGSEAPAEG) form a disordered region.

This sequence belongs to the polyribonucleotide nucleotidyltransferase family. It depends on Mg(2+) as a cofactor.

The protein resides in the cytoplasm. It catalyses the reaction RNA(n+1) + phosphate = RNA(n) + a ribonucleoside 5'-diphosphate. Its function is as follows. Involved in mRNA degradation. Catalyzes the phosphorolysis of single-stranded polyribonucleotides processively in the 3'- to 5'-direction. This Clavibacter michiganensis subsp. michiganensis (strain NCPPB 382) protein is Polyribonucleotide nucleotidyltransferase.